Reading from the N-terminus, the 143-residue chain is Large ribosomal subunit protein uL16 (143 aa).

Over residues methionine 1 to arginine 14 the composition is skewed to basic residues. A disordered region spans residues methionine 1 to glycine 23.

The protein belongs to the universal ribosomal protein uL16 family. Part of the 50S ribosomal subunit.

Functionally, binds 23S rRNA and is also seen to make contacts with the A and possibly P site tRNAs. In Desulforudis audaxviator (strain MP104C), this protein is Large ribosomal subunit protein uL16.